The primary structure comprises 112 residues: Protein BEX3 (112 aa).

The disordered stretch occupies residues 1 to 45; that stretch reads MANIHQENEEMEQPVQNGEEDRPLGGGEGHQPERNHRRGQARRLA. Residues 69–94 are interaction with p75NTR/NGFR; sequence EIFMEEMREIRRKLRELQLRNCLRIL. Residues 69–112 are interaction with 14-3-3 epsilon; it reads EIFMEEMREIRRKLRELQLRNCLRILMGELSNHHDHHDEFCLMP. The Nuclear export signal signature appears at 78–88; the sequence is IRRKLRELQLR. Residues 101-105 are his cluster; the sequence is HHDHH. A Zn(2+)-binding site is contributed by Cys-109.

Belongs to the BEX family. Self-associates. Binds to the DEATH domain of p75NTR/NGFR. Interacts with 14-3-3 epsilon (YWHAE). Interacts with DIABLO/SMAC. Post-translationally, ubiquitinated. Degraded by the proteasome.

The protein localises to the nucleus. The protein resides in the cytoplasm. It is found in the cytosol. Its function is as follows. May be a signaling adapter molecule involved in NGFR/p75NTR-mediated apoptosis induced by NGF. Plays a role in zinc-triggered neuronal death. In absence of reductive stress, acts as a pseudosubstrate for the CRL2(FEM1B) complex: associates with FEM1B via zinc, thereby preventing association between FEM1B and its substrates. The sequence is that of Protein BEX3 from Bos taurus (Bovine).